The primary structure comprises 324 residues: Pancreas transcription factor 1 subunit alpha (324 aa).

The 53-residue stretch at 160-212 (QLRQAANVRERRRMQSINDAFEGLRSHIPTLPYEKRLSKVDTLRLAIGYINFL) folds into the bHLH domain. The disordered stretch occupies residues 302-324 (DPRKLNSKSFDNIENEPPFEFVS).

Component of the pancreas transcription factor 1 complex (PTF1) which is composed of TCF3/p75, TCF12/p64 and PTF1A/p48. TCF3 is responsible for the nuclear import of the p48/p64 complex. Interacts with TCF3 and RBPSUH/RBP-Jkappa. Expressed in precursors of pancreatic islets, acini and ducts.

Its subcellular location is the nucleus. The protein resides in the cytoplasm. Its function is as follows. Transcription factor implicated in the cell fate determination in various organs. Binds to the E-box consensus sequence 5'-CANNTG-3'. Plays a role in early and late pancreas development and differentiation. Important for determining whether cells allocated to the pancreatic buds continue towards pancreatic organogenesis or revert back to duodenal fates. May be involved in the maintenance of exocrine pancreas-specific gene expression including ELA1 and amylase. Required for the formation of pancreatic acinar and ductal cells. Plays an important role in cerebellar development. Directly regulated by FOXN4 and RORC during retinal development, FOXN4-PTF1A pathway plays a central role in directing the differentiation of retinal progenitors towards horizontal and amacrine fates. The protein is Pancreas transcription factor 1 subunit alpha (Ptf1a) of Mus musculus (Mouse).